Consider the following 406-residue polypeptide: Collagen and calcium-binding EGF domain-containing protein 1 (406 aa).

The signal sequence occupies residues 1–34 (MVPPPPSRGGAARGQLGRSLGPLLLLLALGHTWT). The EGF-like; calcium-binding domain occupies 134–175 (DIDECASSNGTLCAHICINTLGSYRCECREGYIREDDGKTCT). Intrachain disulfides connect C138/C150, C146/C159, and C161/C174. N142 is a glycosylation site (N-linked (GlcNAc...) asparagine). N182 is a glycosylation site (N-linked (GlcNAc...) asparagine). Disordered stretches follow at residues 244–335 (YLPG…PGSF) and 360–406 (RTHS…DFYP). 2 consecutive Collagen-like domains span residues 245–290 (LPGP…PMGP) and 300–333 (GRRG…GPPG). Over residues 270 to 279 (PGMPGPPGQP) the composition is skewed to pro residues. Residues 281-292 (PRGSMGPMGPSP) show a composition bias toward low complexity. O-linked (Xyl...) (chondroitin sulfate) serine glycosylation is present at S385. Residues 386-406 (GDDHPRRTETRDLRAPRDFYP) show a composition bias toward basic and acidic residues.

It belongs to the CCBE1 family. As to expression, detected in fibroblasts and urine (at protein level). Not expressed in blood or lymphatic endothelial cells.

The protein resides in the secreted. Required for lymphangioblast budding and angiogenic sprouting from venous endothelium during embryogenesis. In Homo sapiens (Human), this protein is Collagen and calcium-binding EGF domain-containing protein 1 (CCBE1).